The following is a 76-amino-acid chain: uncharacterized protein (76 aa).

This is an uncharacterized protein from Escherichia coli (strain K12).